The primary structure comprises 474 residues: GTPase Der (474 aa).

EngA-type G domains follow at residues 3 to 167 and 204 to 379; these read FTVA…GVDR and LRVA…MVWN. GTP contacts are provided by residues 9 to 16, 56 to 60, 119 to 122, 210 to 217, 257 to 261, and 322 to 325; these read GRPNVGKS, DTAGL, NKSE, GRPNAGKS, DTAGM, and NKWD. A KH-like domain is found at 380 to 464; it reads KRISTAKLNR…PIRIHLKASE (85 aa).

Belongs to the TRAFAC class TrmE-Era-EngA-EngB-Septin-like GTPase superfamily. EngA (Der) GTPase family. Associates with the 50S ribosomal subunit.

Functionally, GTPase that plays an essential role in the late steps of ribosome biogenesis. The polypeptide is GTPase Der (Allorhizobium ampelinum (strain ATCC BAA-846 / DSM 112012 / S4) (Agrobacterium vitis (strain S4))).